Consider the following 350-residue polypeptide: Atypical chemokine receptor 4 (350 aa).

The Extracellular portion of the chain corresponds to 1-41; that stretch reads MAVEYNQSTDYYYEENEMNDTHDYSQYEVICIKEEVRKFAK. 2 N-linked (GlcNAc...) asparagine glycosylation sites follow: Asn6 and Asn19. Residues 42–66 form a helical membrane-spanning segment; that stretch reads VFLPAFFTIAFIIGLAGNSTVVAIY. The Cytoplasmic segment spans residues 67–79; sequence AYYKKRRTKTDVY. A helical transmembrane segment spans residues 80–99; that stretch reads ILNLAVADLFLLFTLPFWAV. The Extracellular portion of the chain corresponds to 100 to 113; it reads NAVHGWVLGKIMCK. Residues Cys112 and Cys184 are joined by a disulfide bond. Residues 114 to 135 traverse the membrane as a helical segment; the sequence is VTSALYTVNFVSGMQFLACIST. The Cytoplasmic segment spans residues 136–153; sequence DRYWAVTKAPSQSGVGKP. The helical transmembrane segment at 154–175 threads the bilayer; it reads CWVICFCVWVAAILLSIPQLVF. Residues 176-199 are Extracellular-facing; sequence YTVNHKARCVPIFPYHLGTSMKAS. A helical transmembrane segment spans residues 200 to 222; that stretch reads IQILEICIGFIIPFLIMAVCYFI. At 223–241 the chain is on the cytoplasmic side; that stretch reads TAKTLIKMPNIKKSQPLKV. Residues 242–265 form a helical membrane-spanning segment; sequence LFTVVIVFIVTQLPYNIVKFCQAI. At 266 to 283 the chain is on the extracellular side; the sequence is DIIYSLITDCDMSKRMDV. A helical transmembrane segment spans residues 284 to 306; the sequence is AIQITESIALFHSCLNPVLYVFM. Residues 307–350 are Cytoplasmic-facing; the sequence is GTSFKNYIMKVAKKYGSWRRQRQNVEEIPFESEDATEPTSTFSI.

This sequence belongs to the G-protein coupled receptor 1 family. Atypical chemokine receptor subfamily. As to quaternary structure, forms heteromers with CXCR3. Interacts with ARRB1 and ARRB2. Post-translationally, the Ser/Thr residues in the C-terminal cytoplasmic tail may be phosphorylated. Expressed in circumvallate and fungiform papillae, olfactory epithelium and lung. Lower expression in liver, kidney and tongue epithelium bearing no taste papillae. Very low expression in the cerebral cortex of the brain.

The protein resides in the early endosome. It is found in the recycling endosome. Its subcellular location is the cell membrane. Its function is as follows. Atypical chemokine receptor that controls chemokine levels and localization via high-affinity chemokine binding that is uncoupled from classic ligand-driven signal transduction cascades, resulting instead in chemokine sequestration, degradation, or transcytosis. Also known as interceptor (internalizing receptor) or chemokine-scavenging receptor or chemokine decoy receptor. Acts as a receptor for chemokines CCL2, CCL8, CCL13, CCL19, CCL21 and CCL25. Chemokine-binding does not activate G-protein-mediated signal transduction but instead induces beta-arrestin recruitment, leading to ligand internalization. Plays an important role in controlling the migration of immune and cancer cells that express chemokine receptors CCR7 and CCR9, by reducing the availability of CCL19, CCL21, and CCL25 through internalization. Negatively regulates CXCR3-induced chemotaxis. Regulates T-cell development in the thymus. The sequence is that of Atypical chemokine receptor 4 (ACKR4) from Bos taurus (Bovine).